A 51-amino-acid chain; its full sequence is Defensin-like protein 2A (51 aa).

The residue at position 1 (glutamine 1) is a Pyrrolidone carboxylic acid. 4 disulfide bridges follow: cysteine 4–cysteine 51, cysteine 15–cysteine 36, cysteine 21–cysteine 45, and cysteine 25–cysteine 47. Phosphoserine; by CPK is present on serine 8.

Forms oligomers in its native state.

Possesses antifungal activity sensitive to inorganic cations. This chain is Defensin-like protein 2A, found in Sinapis alba (White mustard).